Here is a 528-residue protein sequence, read N- to C-terminus: Aurora kinase (528 aa).

Disordered stretches follow at residues Met-1–Gln-35 and Ile-48–Gln-235. 2 stretches are compositionally biased toward low complexity: residues Asn-18–Asn-29 and His-59–Asn-94. Residues Thr-95–Asn-104 are compositionally biased toward polar residues. The span at Ser-105 to Ser-120 shows a compositional bias: low complexity. A compositionally biased stretch (polar residues) spans Gln-129–Lys-155. The span at Thr-185–Ser-230 shows a compositional bias: low complexity. Residues Phe-242–Ile-515 enclose the Protein kinase domain. ATP-binding positions include Leu-248–Val-256 and Lys-271. Asp-365 (proton acceptor) is an active-site residue.

This sequence belongs to the protein kinase superfamily. Ser/Thr protein kinase family. Aurora subfamily.

It is found in the nucleus. It localises to the cytoplasm. The protein localises to the cytoskeleton. The protein resides in the spindle. Its subcellular location is the chromosome. It is found in the centromere. It localises to the kinetochore. It catalyses the reaction L-seryl-[protein] + ATP = O-phospho-L-seryl-[protein] + ADP + H(+). It carries out the reaction L-threonyl-[protein] + ATP = O-phospho-L-threonyl-[protein] + ADP + H(+). Functionally, component of the chromosomal passenger complex (CPC), a complex that acts as a key regulator of chromosome segregation and cytokinesis. Has a role in error-correction of aberrent kinetochore-microtubule attachments to ensure that sister kinetochores become bioriented and connect to opposite poles by promoting spindle assembly checkpoint signaling. The chain is Aurora kinase (IPL1) from Candida albicans (strain SC5314 / ATCC MYA-2876) (Yeast).